The following is a 350-amino-acid chain: DNA repair protein rhp55 (350 aa).

Residue 51-58 (GAPGMGKT) coordinates ATP. The disordered stretch occupies residues 331–350 (QSIPTNSSQRRKRSILECES).

This sequence belongs to the RecA family. RAD55 subfamily.

Its subcellular location is the nucleus. Its function is as follows. Required for radiation resistance and meiotic viability and acts in recombination and recombinational DNA repair pathways. The chain is DNA repair protein rhp55 (rhp55) from Schizosaccharomyces pombe (strain 972 / ATCC 24843) (Fission yeast).